Reading from the N-terminus, the 699-residue chain is Elongation factor G (699 aa).

The tr-type G domain maps to 8–289 (ERYRNIGISA…AVVEYMPAPT (282 aa)). GTP is bound by residues 17–24 (AHIDAGKT), 88–92 (DTPGH), and 142–145 (NKMD).

It belongs to the TRAFAC class translation factor GTPase superfamily. Classic translation factor GTPase family. EF-G/EF-2 subfamily.

It is found in the cytoplasm. Its function is as follows. Catalyzes the GTP-dependent ribosomal translocation step during translation elongation. During this step, the ribosome changes from the pre-translocational (PRE) to the post-translocational (POST) state as the newly formed A-site-bound peptidyl-tRNA and P-site-bound deacylated tRNA move to the P and E sites, respectively. Catalyzes the coordinated movement of the two tRNA molecules, the mRNA and conformational changes in the ribosome. The polypeptide is Elongation factor G (Variovorax paradoxus (strain S110)).